A 299-amino-acid chain; its full sequence is Acetylglutamate kinase (299 aa).

Substrate-binding positions include 70–71 (GG), R92, and N186.

Belongs to the acetylglutamate kinase family. ArgB subfamily.

It is found in the cytoplasm. It catalyses the reaction N-acetyl-L-glutamate + ATP = N-acetyl-L-glutamyl 5-phosphate + ADP. The protein operates within amino-acid biosynthesis; L-arginine biosynthesis; N(2)-acetyl-L-ornithine from L-glutamate: step 2/4. Catalyzes the ATP-dependent phosphorylation of N-acetyl-L-glutamate. This Petrotoga mobilis (strain DSM 10674 / SJ95) protein is Acetylglutamate kinase.